Here is a 337-residue protein sequence, read N- to C-terminus: Holliday junction branch migration complex subunit RuvB (337 aa).

A large ATPase domain (RuvB-L) region spans residues 4–184 (ADRLIAPAAI…FGIVQRLEFY (181 aa)). Residues isoleucine 23, arginine 24, glycine 65, lysine 68, threonine 69, threonine 70, 131–133 (EDY), arginine 174, tyrosine 184, and arginine 221 each bind ATP. Residue threonine 69 participates in Mg(2+) binding. The tract at residues 185–255 (KVEDLAHIVG…IAAQALDMLD (71 aa)) is small ATPAse domain (RuvB-S). Residues 258–337 (NAGFDYMDRK…FGLTTPERQG (80 aa)) form a head domain (RuvB-H) region. Positions 313 and 318 each coordinate DNA.

Belongs to the RuvB family. As to quaternary structure, homohexamer. Forms an RuvA(8)-RuvB(12)-Holliday junction (HJ) complex. HJ DNA is sandwiched between 2 RuvA tetramers; dsDNA enters through RuvA and exits via RuvB. An RuvB hexamer assembles on each DNA strand where it exits the tetramer. Each RuvB hexamer is contacted by two RuvA subunits (via domain III) on 2 adjacent RuvB subunits; this complex drives branch migration. In the full resolvosome a probable DNA-RuvA(4)-RuvB(12)-RuvC(2) complex forms which resolves the HJ.

The protein resides in the cytoplasm. It catalyses the reaction ATP + H2O = ADP + phosphate + H(+). The RuvA-RuvB-RuvC complex processes Holliday junction (HJ) DNA during genetic recombination and DNA repair, while the RuvA-RuvB complex plays an important role in the rescue of blocked DNA replication forks via replication fork reversal (RFR). RuvA specifically binds to HJ cruciform DNA, conferring on it an open structure. The RuvB hexamer acts as an ATP-dependent pump, pulling dsDNA into and through the RuvAB complex. RuvB forms 2 homohexamers on either side of HJ DNA bound by 1 or 2 RuvA tetramers; 4 subunits per hexamer contact DNA at a time. Coordinated motions by a converter formed by DNA-disengaged RuvB subunits stimulates ATP hydrolysis and nucleotide exchange. Immobilization of the converter enables RuvB to convert the ATP-contained energy into a lever motion, pulling 2 nucleotides of DNA out of the RuvA tetramer per ATP hydrolyzed, thus driving DNA branch migration. The RuvB motors rotate together with the DNA substrate, which together with the progressing nucleotide cycle form the mechanistic basis for DNA recombination by continuous HJ branch migration. Branch migration allows RuvC to scan DNA until it finds its consensus sequence, where it cleaves and resolves cruciform DNA. The polypeptide is Holliday junction branch migration complex subunit RuvB (Tolumonas auensis (strain DSM 9187 / NBRC 110442 / TA 4)).